A 70-amino-acid chain; its full sequence is Conotoxin ba3a (70 aa).

An N-terminal signal peptide occupies residues 1–20 (MLKIGVMLSIILVLFPLATL). The propeptide occupies 21 to 55 (QLVAERPAAERYAENKQDLNPDERRNYLVDLGVER).

As to expression, expressed by the venom duct.

The protein localises to the secreted. In Conus bayani (Bayan's cone), this protein is Conotoxin ba3a.